Reading from the N-terminus, the 478-residue chain is F-box/kelch-repeat protein At1g51550 (478 aa).

Residues M1 to P20 are disordered. A compositionally biased stretch (low complexity) spans S9–P20. An F-box domain is found at S18 to L64. Kelch repeat units lie at residues L135–E187 and K246–E299.

The sequence is that of F-box/kelch-repeat protein At1g51550 from Arabidopsis thaliana (Mouse-ear cress).